A 402-amino-acid polypeptide reads, in one-letter code: Envelope glycoprotein D (402 aa).

Residues 1 to 30 form the signal peptide; the sequence is MSTFKLMMDGRLVFAMAIAILSVVLSCGTC. Over 31 to 355 the chain is Virion surface; it reads EKAKRAVRGR…NSTFVGISVG (325 aa). 2 N-linked (GlcNAc...) asparagine; by host glycosylation sites follow: N53 and N61. Cystine bridges form between C88/C209, C126/C223, and C138/C147. The segment at 281–315 is disordered; that stretch reads PDNHPGFDSVESEITQNKTDPKPGQADPKPNQPFK. Residues N297 and N346 are each glycosylated (N-linked (GlcNAc...) asparagine; by host). Residues 356–372 traverse the membrane as a helical segment; it reads LGIAGLVLVGVILYVCL. Topologically, residues 373–402 are intravirion; sequence RRKKELKKSAQNGLTRLRSTFKDVKYTQLP.

This sequence belongs to the herpesviridae glycoprotein D family.

The protein localises to the virion membrane. Envelope glycoprotein that binds to host cell entry receptors, promoting the virus entry into host cells. May trigger fusion with host membrane, by recruiting the fusion machinery composed of gB and gH/gL. The protein is Envelope glycoprotein D (gD) of Equus caballus (Horse).